The chain runs to 342 residues: Protein-glutamate methylesterase/protein-glutamine glutaminase 4 (342 aa).

The 118-residue stretch at 2–119 (NIGIVNDLPL…GGSADPSQPL (118 aa)) folds into the Response regulatory domain. Residue aspartate 53 is modified to 4-aspartylphosphate. Residues 144–337 (PAPQGALPPL…DQLISLVQRN (194 aa)) form the CheB-type methylesterase domain. Residues serine 159, histidine 186, and aspartate 279 contribute to the active site.

Belongs to the CheB family. In terms of processing, phosphorylated by CheA. Phosphorylation of the N-terminal regulatory domain activates the methylesterase activity.

Its subcellular location is the cytoplasm. It catalyses the reaction [protein]-L-glutamate 5-O-methyl ester + H2O = L-glutamyl-[protein] + methanol + H(+). The catalysed reaction is L-glutaminyl-[protein] + H2O = L-glutamyl-[protein] + NH4(+). In terms of biological role, involved in chemotaxis. Part of a chemotaxis signal transduction system that modulates chemotaxis in response to various stimuli. Catalyzes the demethylation of specific methylglutamate residues introduced into the chemoreceptors (methyl-accepting chemotaxis proteins or MCP) by CheR. Also mediates the irreversible deamidation of specific glutamine residues to glutamic acid. In Burkholderia thailandensis (strain ATCC 700388 / DSM 13276 / CCUG 48851 / CIP 106301 / E264), this protein is Protein-glutamate methylesterase/protein-glutamine glutaminase 4.